Consider the following 261-residue polypeptide: Non-homologous end joining protein Ku 1 (261 aa).

The 160-residue stretch at 12–171 (SFSLVAIPVQ…LITLHYSDEV (160 aa)) folds into the Ku domain.

The protein belongs to the prokaryotic Ku family. As to quaternary structure, homodimer. Interacts with LigD.

Functionally, with LigD forms a non-homologous end joining (NHEJ) DNA repair enzyme, which repairs dsDNA breaks with reduced fidelity. Binds linear dsDNA with 5'- and 3'- overhangs but not closed circular dsDNA nor ssDNA. Recruits and stimulates the ligase activity of LigD. The sequence is that of Non-homologous end joining protein Ku 1 from Geotalea uraniireducens (strain Rf4) (Geobacter uraniireducens).